A 388-amino-acid polypeptide reads, in one-letter code: Na(+)/H(+) antiporter NhaA (388 aa).

Topologically, residues 1–11 are cytoplasmic; sequence MKHLHRFFSSD. Residues 12–31 traverse the membrane as a helical segment; the sequence is ASGGIILIIAAILAMMMANS. Topologically, residues 32–58 are periplasmic; that stretch reads GATSGWYHDFLETPVQLRVGSLEINKN. Residues 59–80 form a helical membrane-spanning segment; it reads MLLWINDALMAVFFLLVGLEVK. Residues 81 to 96 are Cytoplasmic-facing; sequence RELMQGSLASLRQAAF. The chain crosses the membrane as a helical span at residues 97 to 116; that stretch reads PVIAAIGGMIVPALLYLAFN. At 117 to 122 the chain is on the periplasmic side; the sequence is YADPIT. The helical transmembrane segment at 123 to 130 threads the bilayer; it reads REGWAIPA. Over 131–154 the chain is Cytoplasmic; the sequence is ATDIAFALGVLALLGSRVPLALKI. Residues 155–176 traverse the membrane as a helical segment; that stretch reads FLMALAIIDDLGAIIIIALFYT. Over 177–180 the chain is Periplasmic; that stretch reads NDLS. The helical transmembrane segment at 181 to 200 threads the bilayer; it reads MASLGVAAVAIAVLAVLNLC. Residues 201-204 are Cytoplasmic-facing; the sequence is GVRR. A helical membrane pass occupies residues 205–222; sequence TGVYILVGVVLWTAVLKS. Position 223 (glycine 223) is a topological domain, periplasmic. The helical transmembrane segment at 224–236 threads the bilayer; the sequence is VHATLAGVIVGFF. The Cytoplasmic portion of the chain corresponds to 237–253; the sequence is IPLKEKHGRSTAKRLEH. Residues 254-272 form a helical membrane-spanning segment; the sequence is VLHPWVAYLILPLFAFANA. At 273-286 the chain is on the periplasmic side; the sequence is GVSLQGVTLDGLTS. Residues 287-310 form a helical membrane-spanning segment; it reads ILPLGIIAGLLIGKPLGISLFCWL. Over 311 to 339 the chain is Cytoplasmic; it reads ALRLKLAHLPEGTTYQQIMAVGILCGIGF. A helical transmembrane segment spans residues 340 to 350; the sequence is TMSIFIASLAF. Topologically, residues 351–357 are periplasmic; sequence GSVDPEL. The chain crosses the membrane as a helical span at residues 358-380; sequence INWAKLGILVGSISSAVIGYSWL. At 381 to 388 the chain is on the cytoplasmic side; sequence RVRLRPSV.

Belongs to the NhaA Na(+)/H(+) (TC 2.A.33) antiporter family.

The protein localises to the cell inner membrane. The enzyme catalyses Na(+)(in) + 2 H(+)(out) = Na(+)(out) + 2 H(+)(in). Its function is as follows. Na(+)/H(+) antiporter that extrudes sodium in exchange for external protons. The sequence is that of Na(+)/H(+) antiporter NhaA from Shigella dysenteriae serotype 1 (strain Sd197).